Reading from the N-terminus, the 371-residue chain is MLLLPLSVLLLLTQPWRSLGAEMKIYSQKTLANGCTLVVCRPPEGGLPGRDGQDGREGPQGEKGDPGSPGPAGRAGRPGPAGPIGPKGDNGSAGEPGPKGDTGPPGPPGMPGPAGREGPSGKQGSMGPPGTPGPKGDTGPKGGMGAPGMQGSPGPAGLKGERGAPGELGAPGSAGVAGPAGAIGPQGPSGARGPPGLKGDRGDPGERGAKGESGLADVNALKQRVTILEGQLQRLQNAFSRYKKAVLFPDGQAVGKKIFKTAGAVKSYSDAQQLCREAKGQLASPRSAAENEAVAQLVRAKNNDAFLSMNDISTEGKFTYPTGESLVYSNWASGEPNNNNAGQPENCVQIYREGKWNDVPCSEPLLVICEF.

The N-terminal stretch at 1–20 (MLLLPLSVLLLLTQPWRSLG) is a signal peptide. A disordered region spans residues 43 to 215 (PEGGLPGRDG…ERGAKGESGL (173 aa)). The 171-residue stretch at 46–216 (GLPGRDGQDG…RGAKGESGLA (171 aa)) folds into the Collagen-like domain. Over residues 51–65 (DGQDGREGPQGEKGD) the composition is skewed to basic and acidic residues. A glycan (N-linked (GlcNAc...) asparagine) is linked at Asn90. Over residues 113-128 (PAGREGPSGKQGSMGP) the composition is skewed to low complexity. Positions 139–148 (GPKGGMGAPG) are enriched in gly residues. Residues 170 to 191 (APGSAGVAGPAGAIGPQGPSGA) show a composition bias toward low complexity. Residues 198–210 (KGDRGDPGERGAK) are compositionally biased toward basic and acidic residues. The Cell attachment site motif lies at 201–203 (RGD). The C-type lectin domain maps to 273-371 (QLCREAKGQL…SEPLLVICEF (99 aa)). 2 disulfide bridges follow: Cys275–Cys369 and Cys347–Cys361.

This sequence belongs to the SFTPD family. In terms of assembly, oligomeric complex of 4 set of homotrimers. In terms of processing, hydroxylated. As to expression, highly expressed in thymus and liver.

It localises to the secreted. This is Collectin-46 (CL46) from Bos taurus (Bovine).